Here is a 428-residue protein sequence, read N- to C-terminus: MADVVLGSQWGDEGKGKLVDVLCEDIDVCARCQGGNNAGHTIIVKGVKFDFHMLPSGLVNPKCKNLIGSGVVIHLPSFFEELEAIENKGLDCTGRLFVSSRAHLVFGFHQRTDKLKEAELHETKKSIGTTGKGIGPTYSTKASRSGIRVHHLVSDEPDSWKEFETRLSRLIETRKKRYGHFDCDLESELAKYKVLREKIKPFVVDSIEFMHDAIKDKKKILVEGANALMLDIDFGTYPYVTSSNTGIGGVLTGLGIPPKAINNIYGVVKAYTTRVGEGPFPTEQLNEDGEKLQTIGCEYGVTTGRKRRCGWLDLVVLKYSTLINGYTSLNITKLDVLDTFKEIKIGVSYTYQGKRVTTFPEDLHALGKVDVEYVTFPGWEEDITQIKNYEDLPANAKKYLEFIEEYVEVPIQWVGTGPGRESMLEKNI.

Residues Gly-11 to Lys-17 and Gly-39 to Thr-41 contribute to the GTP site. Asp-12 (proton acceptor) is an active-site residue. Residues Asp-12 and Gly-39 each coordinate Mg(2+). Residues Asp-12–Lys-15, Asn-37–His-40, Thr-130, Arg-144, Asn-226, Thr-241, and Arg-305 contribute to the IMP site. Catalysis depends on His-40, which acts as the Proton donor. Residue Val-301–Arg-307 coordinates substrate. GTP-binding positions include Arg-307, Lys-333 to Asp-335, and Gly-415 to Gly-417.

It belongs to the adenylosuccinate synthetase family. In terms of assembly, homodimer. The cofactor is Mg(2+).

It is found in the cytoplasm. The catalysed reaction is IMP + L-aspartate + GTP = N(6)-(1,2-dicarboxyethyl)-AMP + GDP + phosphate + 2 H(+). The protein operates within purine metabolism; AMP biosynthesis via de novo pathway; AMP from IMP: step 1/2. In terms of biological role, plays an important role in the de novo pathway and in the salvage pathway of purine nucleotide biosynthesis. Catalyzes the first committed step in the biosynthesis of AMP from IMP. This chain is Adenylosuccinate synthetase, found in Komagataella phaffii (strain GS115 / ATCC 20864) (Yeast).